Reading from the N-terminus, the 310-residue chain is Vomeronasal type-1 receptor 90 (310 aa).

Over 1–20 the chain is Extracellular; that stretch reads MRRISTLYGVVDKQAIFFSE. The helical transmembrane segment at 21 to 41 threads the bilayer; sequence VVIGISFNSILFLFHIFQFLL. The Cytoplasmic segment spans residues 42–46; it reads ERRLR. The chain crosses the membrane as a helical span at residues 47–67; the sequence is ITDLIISLLALIHLGMLTVMG. The Extracellular segment spans residues 68-93; the sequence is FRAVDIFASQNVWNDIKCKSLAHLHR. An intrachain disulfide couples Cys85 to Cys172. The helical transmembrane segment at 94–114 threads the bilayer; it reads LLRGLSLCATCLLSIFQAITL. Residues 115–135 are Cytoplasmic-facing; it reads SPRSSCLAKFKYKSTQHSLCS. Residues 136–156 traverse the membrane as a helical segment; sequence LLVLWAFYMSCGTHYSFTIVA. The Extracellular segment spans residues 157–183; that stretch reads DYNFSSRSLIFVTESCIILPMDYITRH. N-linked (GlcNAc...) asparagine glycosylation is present at Asn159. A helical transmembrane segment spans residues 184-204; sequence LFFILGIFRDVSFIGLMALSS. Residues 205–238 are Cytoplasmic-facing; the sequence is GYMVALLCRHRKQAQHLHRTSLSPKASPEQRATR. A helical transmembrane segment spans residues 239–259; that stretch reads TILLLMSFFVLMYCLDCTISA. Over 260–271 the chain is Extracellular; sequence SRLMHNGEPIHH. The chain crosses the membrane as a helical span at residues 272–292; sequence SIQMMVSNSYATLSPLLLIVT. Topologically, residues 293-310 are cytoplasmic; that stretch reads ENRISRFLKSLLGRTVDA.

The protein belongs to the G-protein coupled receptor 1 family. As to expression, expressed in 1-4% of neurons of the vomeronasal organ. Only one pheromone receptor gene may be expressed in a particular neuron. Not expressed in the main olfactory epithelium.

The protein localises to the cell membrane. In terms of biological role, putative pheromone receptor implicated in the regulation of social as well as reproductive behavior. This chain is Vomeronasal type-1 receptor 90 (Vom1r90), found in Rattus norvegicus (Rat).